A 444-amino-acid polypeptide reads, in one-letter code: Argininosuccinate synthase (444 aa).

Residues 18–26 (AFSGGLDTS) and Ala-44 contribute to the ATP site. Tyr-100 is an L-citrulline binding site. ATP is bound by residues Gly-130 and Thr-132. L-aspartate is bound by residues Thr-132, Asn-136, and Asp-137. Asn-136 contacts L-citrulline. ATP is bound at residue Asp-137. Residues Arg-140 and Ser-193 each coordinate L-citrulline. Asp-195 is a binding site for ATP. 3 residues coordinate L-citrulline: Thr-202, Glu-204, and Glu-281.

Belongs to the argininosuccinate synthase family. Type 2 subfamily. As to quaternary structure, homotetramer.

The protein resides in the cytoplasm. The catalysed reaction is L-citrulline + L-aspartate + ATP = 2-(N(omega)-L-arginino)succinate + AMP + diphosphate + H(+). It participates in amino-acid biosynthesis; L-arginine biosynthesis; L-arginine from L-ornithine and carbamoyl phosphate: step 2/3. This chain is Argininosuccinate synthase, found in Histophilus somni (strain 129Pt) (Haemophilus somnus).